Reading from the N-terminus, the 297-residue chain is Carboxysome assembly protein CcmO (297 aa).

The tract at residues 1–29 (MPTSPTMTSVPIARSPRPSYQQINQHQPS) is disordered. Polar residues predominate over residues 18-29 (PSYQQINQHQPS). BMC domains lie at 32–116 (ALGL…AVFP) and 138–222 (SIGL…HTLP).

It belongs to the bacterial microcompartments protein family. In terms of assembly, homooligomerizes, possibly as a trimer, interacts with CcmK in the carboxysome.

The protein localises to the carboxysome. In terms of biological role, required for formation of the carboxysome, a polyhedral inclusion where RuBisCO (ribulose bisphosphate carboxylase, rbcL-rbcS) is sequestered. Required for recruitment of major shell protein CcmK2 to the pre-carboxysome. Suggested to be a carboxysome shell protein. This is Carboxysome assembly protein CcmO from Synechocystis sp. (strain ATCC 27184 / PCC 6803 / Kazusa).